The sequence spans 392 residues: Lipid-A-disaccharide synthase (392 aa).

It belongs to the LpxB family.

The catalysed reaction is a lipid X + a UDP-2-N,3-O-bis[(3R)-3-hydroxyacyl]-alpha-D-glucosamine = a lipid A disaccharide + UDP + H(+). Its pathway is bacterial outer membrane biogenesis; LPS lipid A biosynthesis. Functionally, condensation of UDP-2,3-diacylglucosamine and 2,3-diacylglucosamine-1-phosphate to form lipid A disaccharide, a precursor of lipid A, a phosphorylated glycolipid that anchors the lipopolysaccharide to the outer membrane of the cell. In Syntrophotalea carbinolica (strain DSM 2380 / NBRC 103641 / GraBd1) (Pelobacter carbinolicus), this protein is Lipid-A-disaccharide synthase.